The sequence spans 86 residues: Omega-theraphotoxin-Hhn1f 1 (86 aa).

The N-terminal stretch at 1–21 (MKSIVFVALFGLALLAVVCSA) is a signal peptide. Positions 22–50 (SEDAHKELLKEVVRAMVVDKTDAVQAEER) are excised as a propeptide. 3 disulfide bridges follow: Cys-52/Cys-66, Cys-59/Cys-71, and Cys-65/Cys-78.

This sequence belongs to the neurotoxin 10 (Hwtx-1) family. 17 (Hntx-9) subfamily. In terms of tissue distribution, expressed by the venom gland.

The protein localises to the secreted. In terms of biological role, ion channel inhibitor. The polypeptide is Omega-theraphotoxin-Hhn1f 1 (Cyriopagopus hainanus (Chinese bird spider)).